The following is a 93-amino-acid chain: Transcription factor PRE3 (93 aa).

The 56-residue stretch at 6–61 (SRSRQSSGTSRISEDQINDLIIKLQQLLPELRDSRRSDKVSAARVLQDTCNYIRNL) folds into the bHLH domain.

As to quaternary structure, homodimer. Interacts with BHLH 147, BHLH148, BHLH149, BHLH150 and IBH1. Interacts with SIEL. As to expression, expressed in root and shoot meristems, and young siliques. Low levels detected in all aerial tissues.

It localises to the nucleus. The protein localises to the cytoplasm. Functionally, atypical and probable non DNA-binding bHLH transcription factor required for MONOPTEROS-dependent root initiation in embryo. Promotes the correct definition of the hypophysis cell division plane. Transcriptionally controlled by MONOPTEROS. Moves from its site of synthesis in pro-embryos cells into the hypophysis. Regulates brassinosteroid (BR) signaling by sequestering negative BR signaling components. May function as positive regulator of gibberellin signaling. May play a role in the regulation of light signaling and possibly auxin signaling. This is Transcription factor PRE3 (PRE3) from Arabidopsis thaliana (Mouse-ear cress).